Reading from the N-terminus, the 200-residue chain is Small ribosomal subunit protein uS4 (200 aa).

The tract at residues 22–43 (TGKELERRPYAPGQHGPTQRKK) is disordered. The region spanning 92-170 (QRLDNIVYRL…VPEYVTFDAE (79 aa)) is the S4 RNA-binding domain.

This sequence belongs to the universal ribosomal protein uS4 family. As to quaternary structure, part of the 30S ribosomal subunit. Contacts protein S5. The interaction surface between S4 and S5 is involved in control of translational fidelity.

One of the primary rRNA binding proteins, it binds directly to 16S rRNA where it nucleates assembly of the body of the 30S subunit. Its function is as follows. With S5 and S12 plays an important role in translational accuracy. The polypeptide is Small ribosomal subunit protein uS4 (Listeria monocytogenes serotype 4b (strain F2365)).